We begin with the raw amino-acid sequence, 393 residues long: Sedoheptulose-1,7-bisphosphatase, chloroplastic (393 aa).

Cysteines 115 and 120 form a disulfide. 5 residues coordinate Mg(2+): aspartate 126, glutamate 155, aspartate 176, leucine 178, and aspartate 179. Substrate contacts are provided by residues 179 to 182 (DGSS), tyrosine 290, and lysine 320. Mg(2+) is bound at residue glutamate 326.

The protein belongs to the FBPase class 1 family. Homodimer. The cofactor is Mg(2+).

Its subcellular location is the plastid. The protein localises to the chloroplast. It carries out the reaction D-sedoheptulose 1,7-bisphosphate + H2O = D-sedoheptulose 7-phosphate + phosphate. It participates in carbohydrate biosynthesis; Calvin cycle. In Triticum aestivum (Wheat), this protein is Sedoheptulose-1,7-bisphosphatase, chloroplastic.